The chain runs to 160 residues: Photosystem II extrinsic protein V (160 aa).

The signal sequence occupies residues 1–25; that stretch reads MKRFILLAIATVFFFCQFQTNPVNA. Heme c-binding residues include Cys-62, Cys-65, His-66, and His-117.

It belongs to the cytochrome c family. PsbV subfamily. PSII is composed of 1 copy each of membrane proteins PsbA, PsbB, PsbC, PsbD, PsbE, PsbF, PsbH, PsbI, PsbJ, PsbK, PsbL, PsbM, PsbT, PsbX, PsbY, PsbZ, Psb30/Ycf12, peripheral proteins PsbO, CyanoQ (PsbQ), PsbU, PsbV and a large number of cofactors. It forms dimeric complexes. Heme c is required as a cofactor.

It localises to the cellular thylakoid membrane. Functionally, one of the extrinsic, lumenal subunits of photosystem II (PSII). PSII is a light-driven water plastoquinone oxidoreductase, using light energy to abstract electrons from H(2)O, generating a proton gradient subsequently used for ATP formation. The extrinsic proteins stabilize the structure of photosystem II oxygen-evolving complex (OEC), the ion environment of oxygen evolution and protect the OEC against heat-induced inactivation. Low-potential cytochrome c that plays a role in the OEC of PSII. This chain is Photosystem II extrinsic protein V, found in Rippkaea orientalis (strain PCC 8801 / RF-1) (Cyanothece sp. (strain PCC 8801)).